A 127-amino-acid chain; its full sequence is Small ribosomal subunit protein uS13 (127 aa).

Residues 100-127 (GQRTRTNARTRKGVRKTVAGKKKAPAKK) are disordered. Residues 101 to 127 (QRTRTNARTRKGVRKTVAGKKKAPAKK) show a composition bias toward basic residues.

Belongs to the universal ribosomal protein uS13 family. As to quaternary structure, part of the 30S ribosomal subunit. Forms a loose heterodimer with protein S19. Forms two bridges to the 50S subunit in the 70S ribosome.

Functionally, located at the top of the head of the 30S subunit, it contacts several helices of the 16S rRNA. In the 70S ribosome it contacts the 23S rRNA (bridge B1a) and protein L5 of the 50S subunit (bridge B1b), connecting the 2 subunits; these bridges are implicated in subunit movement. Contacts the tRNAs in the A and P-sites. The sequence is that of Small ribosomal subunit protein uS13 from Synechococcus sp. (strain JA-3-3Ab) (Cyanobacteria bacterium Yellowstone A-Prime).